Here is a 539-residue protein sequence, read N- to C-terminus: Glycerophosphoinositol inositolphosphodiesterase GDPD2 (539 aa).

Over 1–38 the chain is Cytoplasmic; that stretch reads MAESPGCCSVWARCLHCLYSCHWRKCPRERMQTSKCDC. The helical transmembrane segment at 39–59 threads the bilayer; the sequence is IWFGLLFLTFLLSLSWLYIGL. At 60–85 the chain is on the extracellular side; it reads VLLNDLHNFNEFLFRRWGHWMDWSLA. A helical membrane pass occupies residues 86–106; the sequence is FLLVISLLVTYASLLLVLALL. Residues 107 to 121 lie on the Cytoplasmic side of the membrane; the sequence is LRLCRQPLHLHSLHK. Residues 122–142 form a helical membrane-spanning segment; that stretch reads VLLLLIMLLVAAGLVGLDIQW. At 143–154 the chain is on the extracellular side; it reads QQEWHSLRVSLQ. The helical transmembrane segment at 155 to 175 threads the bilayer; that stretch reads ATAPFLHIGAAAGIALLAWPV. The Cytoplasmic portion of the chain corresponds to 176 to 188; it reads ADTFYRIHRRGPK. Residues 189-209 traverse the membrane as a helical segment; it reads ILLLLLFFGVVLVIYLAPLCI. Residues 210-490 lie on the Extracellular side of the membrane; the sequence is SSPCIMEPRD…PIWLITPQTY (281 aa). One can recognise a GP-PDE domain in the interval 224–479; it reads PGLVGHRGAP…NDCQLLQQMR (256 aa). 3 residues coordinate a divalent metal cation: glutamate 256, aspartate 258, and histidine 271. Asparagine 442 is a glycosylation site (N-linked (GlcNAc...) asparagine). The helical transmembrane segment at 491 to 511 threads the bilayer; sequence LIIWVITNCVSTMLLLWTFLL. The Cytoplasmic portion of the chain corresponds to 512–539; it reads QRRFVKKRGKTGLETAVLLTRINNFMME.

Belongs to the glycerophosphoryl diester phosphodiesterase family. Ca(2+) is required as a cofactor.

The protein resides in the cell membrane. It is found in the cytoplasm. Its subcellular location is the cytoskeleton. The catalysed reaction is sn-glycero-3-phospho-1D-myo-inositol + H2O = 1D-myo-inositol 1-phosphate + glycerol + H(+). In terms of biological role, has glycerophosphoinositol inositolphosphodiesterase activity and specifically hydrolyzes glycerophosphoinositol, with no activity for other substrates such as glycerophosphoinositol 4-phosphate, glycerophosphocholine, glycerophosphoethanolamine, and glycerophosphoserine. Accelerates the program of osteoblast differentiation and growth. May play a role in remodeling of the actin cytoskeleton. In Homo sapiens (Human), this protein is Glycerophosphoinositol inositolphosphodiesterase GDPD2 (GDPD2).